The primary structure comprises 772 residues: Endoplasmic reticulum membrane sensor NFE2L1 (772 aa).

The helical; Signal-anchor for type II membrane protein transmembrane segment at 7–24 (YLTEGLLQFTILLSLIGV) threads the bilayer. A disordered region spans residues 108 to 148 (DPEGSVSGSQPNSGLALESSSGLQDVTGPDNGVRESETEQG). Residues 113 to 131 (VSGSQPNSGLALESSSGLQ) are compositionally biased toward polar residues. A cholesterol recognition/amino acid consensus (CRAC) region region spans residues 191–199 (VFDYSHRQK). N-linked (GlcNAc...) asparagine glycans are attached at residues Asn-348 and Asn-360. The interval 379-383 (SPEVE) is CPD. Residues Asn-412 and Asn-423 are each glycosylated (N-linked (GlcNAc...) asparagine). Disordered regions lie at residues 470-532 (EEEF…DSET) and 582-613 (SALD…QMSR). Positions 476-480 (DSGLS) match the Destruction motif motif. Over residues 476-523 (DSGLSLDSSHSPSSLSSSEGSSSSSSSSSSSSSSASSSASSSFSEEGA) the composition is skewed to low complexity. Position 528 is a phosphoserine; by CK2 (Ser-528). The span at 598–613 (GSKEKQADFLDKQMSR) shows a compositional bias: basic and acidic residues. At Ser-599 the chain carries Phosphoserine; by PKA. Residues 654 to 717 (LIRDIRRRGK…RQMKQKVQSL (64 aa)) form the bZIP domain. Residues 656–675 (RDIRRRGKNKMAAQNCRKRK) are basic motif. The segment at 682-696 (LERDVEDLQRDKARL) is leucine-zipper.

It belongs to the bZIP family. CNC subfamily. In terms of assembly, interacts with KEAP1. Interacts (via CPD region) with FBXW7; leading to its ubiquitination and degradation. Interacts with SYVN1/HRD1; leading to its ubiquitination and degradation. Interacts (when ubiquitinated) with DDI2; leading to its cleavage. As to quaternary structure, interacts (via the bZIP domain) with small MAF protein (MAFF, MAFG or MAFK); required for binding to antioxidant response elements (AREs) on DNA. Interacts (via Destruction motif) with BTRC; leading to its ubiquitination and degradation. Interacts with CEBPB; the heterodimer represses expression of DSPP during odontoblast differentiation. Interacts with MOTS-c, a peptide produced by the mitochondrially encoded 12S rRNA MT-RNR1. In terms of processing, cleaved at Leu-104 by the aspartyl protease DDI2 following retrotranslocation, releasing the protein from the endoplasmic reticulum membrane and forming the transcription factor NRF1 that translocates into the nucleus. Ubiquitination is prerequisite for cleavage by aspartyl protease DDI2. N-glycosylated in normal conditions, when it has a single-pass type II membrane protein topology, with the DNA-binding domain facing the endoplasmic reticulum lumen. Deglycosylated during retrotranslocation to the cytosolic side of the membrane, to have a single-pass type III membrane protein topology with the major part of the protein facing the cytosol. Post-translationally, ubiquitinated by the SCF(FBXW7) complex and SYVN1/HRD1, leading to its degradation by the proteasome. Ubiquitinated during retrotranslocation to the cytosolic side of the membrane: ubiquitination does not lead to degradation and is required for processing by the aspartyl protease DDI2 and subsequent release from the endoplasmic reticulum membrane. In terms of processing, phosphorylation by CK2 at Ser-528 inhibits transcription factor activity, possibly by affecting DNA-binding activity. Phosphorylation at Ser-599 is required for interaction with CEBPB. Ubiquitinated by the SCF(BTRC) complex in the nucleus, leading to its degradation by the proteasome.

It is found in the endoplasmic reticulum membrane. Its subcellular location is the nucleus. Functionally, endoplasmic reticulum membrane sensor that translocates into the nucleus in response to various stresses to act as a transcription factor. Constitutes a precursor of the transcription factor NRF1. Able to detect various cellular stresses, such as cholesterol excess, oxidative stress or proteasome inhibition. In response to stress, it is released from the endoplasmic reticulum membrane following cleavage by the protease DDI2 and translocates into the nucleus to form the transcription factor NRF1. Acts as a key sensor of cholesterol excess: in excess cholesterol conditions, the endoplasmic reticulum membrane form of the protein directly binds cholesterol via its CRAC motif, preventing cleavage and release of the transcription factor NRF1, thereby allowing expression of genes promoting cholesterol removal, such as CD36. Involved in proteasome homeostasis: in response to proteasome inhibition, it is released from the endoplasmic reticulum membrane, translocates to the nucleus and activates expression of genes encoding proteasome subunits. Its function is as follows. CNC-type bZIP family transcription factor that translocates to the nucleus and regulates expression of target genes in response to various stresses. Heterodimerizes with small-Maf proteins (MAFF, MAFG or MAFK) and binds DNA motifs including the antioxidant response elements (AREs), which regulate expression of genes involved in oxidative stress response. Activates or represses expression of target genes, depending on the context. Plays a key role in cholesterol homeostasis by acting as a sensor of cholesterol excess: in low cholesterol conditions, translocates into the nucleus and represses expression of genes involved in defense against cholesterol excess, such as CD36. In excess cholesterol conditions, the endoplasmic reticulum membrane form of the protein directly binds cholesterol via its CRAC motif, preventing cleavage and release of the transcription factor NRF1, thereby allowing expression of genes promoting cholesterol removal. Critical for redox balance in response to oxidative stress: acts by binding the AREs motifs on promoters and mediating activation of oxidative stress response genes, such as GCLC, GCLM, GSS, MT1 and MT2. Plays an essential role during fetal liver hematopoiesis: probably has a protective function against oxidative stress and is involved in lipid homeostasis in the liver. Involved in proteasome homeostasis: in response to proteasome inhibition, mediates the 'bounce-back' of proteasome subunits by translocating into the nucleus and activating expression of genes encoding proteasome subunits. Also involved in regulating glucose flux. Together with CEBPB; represses expression of DSPP during odontoblast differentiation. In response to ascorbic acid induction, activates expression of SP7/Osterix in osteoblasts. The protein is Endoplasmic reticulum membrane sensor NFE2L1 (NFE2L1) of Homo sapiens (Human).